The primary structure comprises 24 residues: Superoxide dismutase [Cu-Zn], chloroplastic (24 aa).

This sequence belongs to the Cu-Zn superoxide dismutase family. Homodimer. Requires Cu cation as cofactor. Zn(2+) is required as a cofactor.

It localises to the plastid. It is found in the chloroplast. It carries out the reaction 2 superoxide + 2 H(+) = H2O2 + O2. Functionally, destroys radicals which are normally produced within the cells and which are toxic to biological systems. This Picea abies (Norway spruce) protein is Superoxide dismutase [Cu-Zn], chloroplastic.